The chain runs to 656 residues: Anion exchange transporter (656 aa).

Residues 1-75 (MTGAKRKKKS…LAFAVLSSVH (75 aa)) are Cytoplasmic-facing. A helical transmembrane segment spans residues 76–96 (PVFGLYGSLFPAIIYAIFGMG). At 97–144 (HHVATGTFALTSLISANAVERIVPQNMQNLTTQSNTSVLGLSDFEMQR) the chain is on the extracellular side. A helical transmembrane segment spans residues 145 to 165 (IHVAAAVSFLGGVIQVAMFVL). A topological domain (cytoplasmic) is located at residue Q166. The chain crosses the membrane as a helical span at residues 167 to 187 (LGSATFVVTEPVISAMTTGAA). At 188–202 (THVVTSQVKYLLGMK) the chain is on the extracellular side. The helical transmembrane segment at 203-223 (MPYISGPLGFFYIYAYVFENI) threads the bilayer. Residues 224–227 (KSVR) lie on the Cytoplasmic side of the membrane. Residues 228–248 (LEALLLSLLSIVVLVLVKELN) form a helical membrane-spanning segment. The Extracellular segment spans residues 249–254 (EQFKRK). Residues 255–275 (IKVVLPVDLVLIIAASFACYC) form a helical membrane-spanning segment. The Cytoplasmic portion of the chain corresponds to 276-306 (TNMENTYGLEVVGHIPQGIPSPRAPPMNILS). The helical transmembrane segment at 307-327 (AVITEAFGVALVGYVASLALA) threads the bilayer. Over 328–343 (QGSAKKFKYSIDDNQE) the chain is Extracellular. Residues 344-364 (FLAHGLSNIVSSFFFCIPSAA) form a helical membrane-spanning segment. The Cytoplasmic portion of the chain corresponds to 365–383 (AMGRTAGLYSTGAKTQVAC). 2 helical membrane-spanning segments follow: residues 384-404 (LISCIFVLIVIYAIGPLLYWL) and 405-425 (PMCVLASIIVVGLKGMLIQFR). Topologically, residues 426–448 (DLKKYWNVDKIDWGIWVSTYVFT) are extracellular. The helical transmembrane segment at 449 to 469 (ICFAANVGLLFGVVCTIAIVI) threads the bilayer. At 470–656 (GRFPRAMTVS…LSKLSDHSEV (187 aa)) the chain is on the cytoplasmic side. In terms of domain architecture, STAS spans 492-641 (TEMDSETLQQ…ESVSAAISHI (150 aa)). The interval 641-656 (IHSNKNLSKLSDHSEV) is membrane targeting.

The protein belongs to the SLC26A/SulP transporter (TC 2.A.53) family. In terms of tissue distribution, expressed in the thyroid gland (at protein level). Expressed in tonsillar high endothelial venule endothelial cells (HEVEC), placenta and in testis, expressed in a subgroup of basal cells in the epididymal ducts.

The protein localises to the basolateral cell membrane. The protein resides in the recycling endosome membrane. It localises to the apical cell membrane. Its subcellular location is the lateral cell membrane. It carries out the reaction chloride(in) = chloride(out). It catalyses the reaction iodide(out) = iodide(in). The catalysed reaction is bromide(in) = bromide(out). The enzyme catalyses oxalate(in) = oxalate(out). It carries out the reaction nitrate(in) = nitrate(out). It catalyses the reaction sulfate(in) = sulfate(out). The catalysed reaction is thiocyanate(in) = thiocyanate(out). The enzyme catalyses D-gluconate(in) = D-gluconate(out). It carries out the reaction hydrogencarbonate(in) = hydrogencarbonate(out). It catalyses the reaction hydrogencarbonate(in) + chloride(out) = hydrogencarbonate(out) + chloride(in). Is active at both alkaline and acidic pH. Activity is inhibited by 4,4'-Di-isothiocyanatostilbene-2,2'-disulfonic acid (DIDS - an inhibitor of several anion channels and transporters). In terms of biological role, acts as an anion channel mediating the transport of chloride, sulfate and oxalate ions. Mediates the transport of bromide, iodide, nitrate, gluconate, thiocyanate and bicarbonate ions. Its permeability towards bicarbonate is weak and increases when pH is above 7. Mediates thiocyanate transport in retinal pigment epithelium cells. Mediates iodide transport in the thyroid gland, playing an important role in the synthesis of thyroid hormones and the maintenance of thyroid function. Although it is an anion channel, according to PubMed:12736153 and PubMed:32119864 it has been shown to exhibit chloride-bicarbonate exchanger activity. This chain is Anion exchange transporter, found in Homo sapiens (Human).